A 90-amino-acid polypeptide reads, in one-letter code: Accessory gland-specific peptide 26Ab (90 aa).

The first 21 residues, 1–21 (MNYFAVLCIFSCICFWQFSDA), serve as a signal peptide directing secretion.

In terms of tissue distribution, main cells of the accessory glands of males.

It localises to the secreted. The protein localises to the extracellular space. In terms of biological role, this protein is transferred from male to female during mating and may affect egglaying and behavior after mating. The protein is Accessory gland-specific peptide 26Ab (Acp26Ab) of Drosophila simulans (Fruit fly).